The primary structure comprises 313 residues: Beta-ribofuranosylphenol 5'-phosphate synthase (313 aa).

The protein belongs to the beta-RFA-P synthase family. In terms of assembly, homodimer.

The enzyme catalyses 5-phospho-alpha-D-ribose 1-diphosphate + 4-hydroxybenzoate + H(+) = 4-(beta-D-ribofuranosyl)phenol 5'-phosphate + CO2 + diphosphate. It catalyses the reaction 4-aminobenzoate + 5-phospho-alpha-D-ribose 1-diphosphate + H(+) = 4-(beta-D-ribofuranosyl)aminobenzene 5'-phosphate + CO2 + diphosphate. It participates in cofactor biosynthesis; 5,6,7,8-tetrahydromethanopterin biosynthesis. Its function is as follows. Catalyzes the condensation of 4-hydroxybenzoate (HB) with 5-phospho-alpha-D-ribose 1-diphosphate (PRPP) to produce beta-ribofuranosylphenol 5'-phosphate (beta-RFH-P). Also catalyzes the condensation of 4-aminobenzoate (pABA) with PRPP to produce beta-ribofuranosylaminobenzene 5'-phosphate (beta-RFA-P). The protein is Beta-ribofuranosylphenol 5'-phosphate synthase of Archaeoglobus fulgidus (strain ATCC 49558 / DSM 4304 / JCM 9628 / NBRC 100126 / VC-16).